Here is a 194-residue protein sequence, read N- to C-terminus: Fibroblast growth factor 7 (194 aa).

The first 31 residues, methionine 1–aspartate 31, serve as a signal peptide directing secretion. Asparagine 45 carries an N-linked (GlcNAc...) asparagine glycan.

Belongs to the heparin-binding growth factors family. As to quaternary structure, interacts with FGFBP1. Interacts with FGFR2. Affinity between fibroblast growth factors (FGFs) and their receptors is increased by heparan sulfate glycosaminoglycans that function as coreceptors.

The protein localises to the secreted. In terms of biological role, plays an important role in the regulation of embryonic development, cell proliferation and cell differentiation. Required for normal branching morphogenesis. Growth factor active on keratinocytes. Possible major paracrine effector of normal epithelial cell proliferation. This Sus scrofa (Pig) protein is Fibroblast growth factor 7 (FGF7).